Here is a 624-residue protein sequence, read N- to C-terminus: tRNA uridine 5-carboxymethylaminomethyl modification enzyme MnmG (624 aa).

FAD is bound by residues 16-21 (GAGHAG), Val128, and Ser183. 275-289 (GPRYCPSIEDKVVRF) provides a ligand contact to NAD(+). FAD is bound at residue Gln372.

The protein belongs to the MnmG family. As to quaternary structure, homodimer. Heterotetramer of two MnmE and two MnmG subunits. FAD serves as cofactor.

Its subcellular location is the cytoplasm. NAD-binding protein involved in the addition of a carboxymethylaminomethyl (cmnm) group at the wobble position (U34) of certain tRNAs, forming tRNA-cmnm(5)s(2)U34. In Geobacter metallireducens (strain ATCC 53774 / DSM 7210 / GS-15), this protein is tRNA uridine 5-carboxymethylaminomethyl modification enzyme MnmG.